A 632-amino-acid chain; its full sequence is 1-deoxy-D-xylulose-5-phosphate synthase (632 aa).

Thiamine diphosphate is bound by residues His-79 and 120–122; that span reads GHA. Asp-151 is a Mg(2+) binding site. Residues 152–153, Asn-180, Phe-292, and Glu-376 contribute to the thiamine diphosphate site; that span reads GS. Asn-180 serves as a coordination point for Mg(2+).

This sequence belongs to the transketolase family. DXPS subfamily. As to quaternary structure, homodimer. Requires Mg(2+) as cofactor. Thiamine diphosphate serves as cofactor.

The catalysed reaction is D-glyceraldehyde 3-phosphate + pyruvate + H(+) = 1-deoxy-D-xylulose 5-phosphate + CO2. Its pathway is metabolic intermediate biosynthesis; 1-deoxy-D-xylulose 5-phosphate biosynthesis; 1-deoxy-D-xylulose 5-phosphate from D-glyceraldehyde 3-phosphate and pyruvate: step 1/1. Its function is as follows. Catalyzes the acyloin condensation reaction between C atoms 2 and 3 of pyruvate and glyceraldehyde 3-phosphate to yield 1-deoxy-D-xylulose-5-phosphate (DXP). The chain is 1-deoxy-D-xylulose-5-phosphate synthase from Azobacteroides pseudotrichonymphae genomovar. CFP2.